The following is a 670-amino-acid chain: MKPIAIQPASLTFNNEGTPVSRDFDDVYFSNDDGLEETRYVFLDGNQLPERFMTHPRDSFIVAESGFGTGLNFLTLWQAFAAFRDAHPDATLQRLHFISFEKFPLTPADLKSAHAHWPELAPWAQQLQAQWPMALPGCQRLVLDGGRVTLDLWLGDINELVDTLDDTHNRQVDAWFLDGFAPSKNPEMWTPGLFTAMARLARPGGTLATFTSAGFVRRGLIEAGFDVVKRKGFGRKREMLTGALSHDAPPPARAPWYARRPASGDKDVAVVGGGIASALLALGLLRRGWQVTLYCEDDAPAQGASGNRQGALYPLLSHHDAALAAFFPAAFTFARRLYDALPVSFDKDWCGVTQLGWDEKSQTKINQMLDLALPDTLAHGVDAREVRERCGVKTGCGGIEYPQGGWLCPAQLTAGVLELAQAHGLRVHYGHRVSALHREDLDWQLDFANGAQARHAAVVLANGHQLSGFPQTEKLPVYPVGGQVSHIPTTPGLGALRQVLCYDGYLTPQNPANAMHCIGASYHRGVSEMRYQEEDQQRNRQRLIDCLPAASWAQEVDVSAGDARCGVRCATRDHLPMVGNAPDYAATLRDYATLSQDASAPETVMPAPVLKNLFVLGALGSRGLCSAPLAAEILASQMSGEPLPLDGATLAALNPNRLWVRKLLKGRAAS.

The tRNA (mnm(5)s(2)U34)-methyltransferase stretch occupies residues 1 to 245 (MKPIAIQPAS…KREMLTGALS (245 aa)). An FAD-dependent cmnm(5)s(2)U34 oxidoreductase region spans residues 271–670 (VGGGIASALL…RKLLKGRAAS (400 aa)).

This sequence in the N-terminal section; belongs to the methyltransferase superfamily. tRNA (mnm(5)s(2)U34)-methyltransferase family. It in the C-terminal section; belongs to the DAO family. The cofactor is FAD.

It localises to the cytoplasm. It carries out the reaction 5-aminomethyl-2-thiouridine(34) in tRNA + S-adenosyl-L-methionine = 5-methylaminomethyl-2-thiouridine(34) in tRNA + S-adenosyl-L-homocysteine + H(+). Functionally, catalyzes the last two steps in the biosynthesis of 5-methylaminomethyl-2-thiouridine (mnm(5)s(2)U) at the wobble position (U34) in tRNA. Catalyzes the FAD-dependent demodification of cmnm(5)s(2)U34 to nm(5)s(2)U34, followed by the transfer of a methyl group from S-adenosyl-L-methionine to nm(5)s(2)U34, to form mnm(5)s(2)U34. This chain is tRNA 5-methylaminomethyl-2-thiouridine biosynthesis bifunctional protein MnmC, found in Cronobacter sakazakii (strain ATCC BAA-894) (Enterobacter sakazakii).